The following is a 588-amino-acid chain: D-3-phosphoglycerate dehydrogenase 3, chloroplastic (588 aa).

A chloroplast-targeting transit peptide spans 1–38; it reads MATSLNLSSIFSSSSRLVTTPSSVFPIRQRRRIILVTS. NAD(+)-binding positions include 195 to 196, Asp-215, 274 to 276, and Asp-300; these read KV and VAR. Arg-276 is a catalytic residue. Glu-305 is a catalytic residue. His-324 acts as the Proton donor in catalysis. An NAD(+)-binding site is contributed by 324-327; the sequence is HLGA. The 73-residue stretch at 516 to 588 folds into the ACT domain; it reads VILCRQVDQP…AIEEFVFLKL (73 aa).

It belongs to the D-isomer specific 2-hydroxyacid dehydrogenase family. In terms of tissue distribution, expressed in aerial parts. Not detected in roots and meristematic tissue. Expressed in cotyledons, adult leaves, stigma and anther filaments. Detected in the embryo.

The protein resides in the plastid. The protein localises to the chloroplast. The catalysed reaction is (2R)-3-phosphoglycerate + NAD(+) = 3-phosphooxypyruvate + NADH + H(+). Its pathway is amino-acid biosynthesis; L-serine biosynthesis; L-serine from 3-phospho-D-glycerate: step 1/3. Its activity is regulated as follows. Partially inhibited by 1 mM serine. Its function is as follows. Involved in the plastidial phosphorylated pathway of serine biosynthesis (PPSB). This Arabidopsis thaliana (Mouse-ear cress) protein is D-3-phosphoglycerate dehydrogenase 3, chloroplastic (PGDH3).